A 246-amino-acid polypeptide reads, in one-letter code: Bis(5'-nucleosyl)-tetraphosphatase PrpE [asymmetrical] (246 aa).

It belongs to the PrpE family. Ni(2+) serves as cofactor.

It carries out the reaction P(1),P(4)-bis(5'-guanosyl) tetraphosphate + H2O = GMP + GTP + 2 H(+). Functionally, asymmetrically hydrolyzes Ap4p to yield AMP and ATP. The chain is Bis(5'-nucleosyl)-tetraphosphatase PrpE [asymmetrical] from Bacillus cereus (strain ATCC 14579 / DSM 31 / CCUG 7414 / JCM 2152 / NBRC 15305 / NCIMB 9373 / NCTC 2599 / NRRL B-3711).